The following is a 165-amino-acid chain: 2-C-methyl-D-erythritol 2,4-cyclodiphosphate synthase (165 aa).

Residues D13 and H15 each contribute to the a divalent metal cation site. Residues 13–15 (DRH) and 39–40 (HS) contribute to the 4-CDP-2-C-methyl-D-erythritol 2-phosphate site. H47 is a binding site for a divalent metal cation. 4-CDP-2-C-methyl-D-erythritol 2-phosphate is bound by residues 61–63 (DIG) and F141.

The protein belongs to the IspF family. Homotrimer. The cofactor is a divalent metal cation.

The catalysed reaction is 4-CDP-2-C-methyl-D-erythritol 2-phosphate = 2-C-methyl-D-erythritol 2,4-cyclic diphosphate + CMP. Its pathway is isoprenoid biosynthesis; isopentenyl diphosphate biosynthesis via DXP pathway; isopentenyl diphosphate from 1-deoxy-D-xylulose 5-phosphate: step 4/6. Involved in the biosynthesis of isopentenyl diphosphate (IPP) and dimethylallyl diphosphate (DMAPP), two major building blocks of isoprenoid compounds. Catalyzes the conversion of 4-diphosphocytidyl-2-C-methyl-D-erythritol 2-phosphate (CDP-ME2P) to 2-C-methyl-D-erythritol 2,4-cyclodiphosphate (ME-CPP) with a corresponding release of cytidine 5-monophosphate (CMP). The sequence is that of 2-C-methyl-D-erythritol 2,4-cyclodiphosphate synthase from Thermotoga maritima (strain ATCC 43589 / DSM 3109 / JCM 10099 / NBRC 100826 / MSB8).